A 478-amino-acid chain; its full sequence is Zinc metalloproteinase/disintegrin (478 aa).

Positions 1-20 are cleaved as a signal peptide; sequence MIQVLLVTICLAAFPYQGSS. Positions 21 to 187 are excised as a propeptide; the sequence is IILESGNVND…PIKKASHLNL (167 aa). One can recognise a Peptidase M12B domain in the interval 193–389; it reads RYVEIVIVVD…QKPQCILKKP (197 aa). 3 disulfides stabilise this stretch: Cys-304–Cys-384, Cys-344–Cys-368, and Cys-346–Cys-351. His-329 contributes to the Zn(2+) binding site. The active site involves Glu-330. Residues His-333 and His-339 each contribute to the Zn(2+) site. Residues 390-408 constitute a propeptide that is removed on maturation; the sequence is LRTDTVSTPVSGNELLEAR. In terms of domain architecture, Disintegrin spans 397 to 478; it reads TPVSGNELLE…ADCPRNVLYG (82 aa). Disulfide bonds link Cys-411/Cys-420, Cys-413/Cys-421, Cys-426/Cys-440, Cys-434/Cys-464, Cys-439/Cys-443, and Cys-452/Cys-471. A propeptide spanning residues 474 to 478 is cleaved from the precursor; that stretch reads NVLYG.

The protein belongs to the venom metalloproteinase (M12B) family. P-II subfamily. P-IIa sub-subfamily. It depends on Zn(2+) as a cofactor. In terms of tissue distribution, expressed by the venom gland.

Its subcellular location is the secreted. Functionally, snake venom zinc metalloproteinase that causes hemorrhage by provoking the degradation of the sub-endothelial matrix proteins (fibronectin, laminin, type IV collagen, nidogen, and gelatins). Displays low cytotoxicity. In vitro, inhibits cancer cell migration (human breast cancer cell line MDA-MB-231) with a significant rate after 24 hours of incubation. This is Zinc metalloproteinase/disintegrin (MPII) from Crotalus durissus collilineatus (Brazilian rattlesnake).